Here is a 352-residue protein sequence, read N- to C-terminus: [LysW]-L-2-aminoadipate/[LysW]-L-glutamate phosphate reductase (352 aa).

Position 13–16 (13–16 (SGYT)) interacts with NADP(+). C153 is a catalytic residue. NADP(+) is bound at residue N319.

Belongs to the NAGSA dehydrogenase family. Type 1 subfamily. LysY sub-subfamily.

The protein resides in the cytoplasm. The catalysed reaction is [amino-group carrier protein]-C-terminal-N-(1-carboxy-5-oxopentan-1-yl)-L-glutamine + phosphate + NADP(+) = [amino-group carrier protein]-C-terminal-N-(1-carboxy-5-phosphooxy-5-oxopentan-1-yl)-L-glutamine + NADPH + H(+). It catalyses the reaction [amino-group carrier protein]-C-terminal-gamma-(L-glutamyl-5-semialdehyde)-L-glutamate + phosphate + NADP(+) = [amino-group carrier protein]-C-terminal-gamma-(5-phospho-L-glutamyl)-L-glutamate + NADPH + H(+). It participates in amino-acid biosynthesis; L-lysine biosynthesis via AAA pathway; L-lysine from L-alpha-aminoadipate (Thermus route): step 3/5. Its pathway is amino-acid biosynthesis; L-arginine biosynthesis. Involved in both the arginine and lysine biosynthetic pathways. The polypeptide is [LysW]-L-2-aminoadipate/[LysW]-L-glutamate phosphate reductase (Saccharolobus solfataricus (strain ATCC 35092 / DSM 1617 / JCM 11322 / P2) (Sulfolobus solfataricus)).